The primary structure comprises 514 residues: Putative exoglucanase type C (514 aa).

A signal peptide spans 1 to 17 (MYRIVATASALIAAARA). Positions 18–439 (QQVCSLNTET…RDVPNSKVSF (422 aa)) are catalytic. Glu-229 (nucleophile) is an active-site residue. Glu-234 acts as the Proton donor in catalysis. N-linked (GlcNAc...) asparagine glycosylation is present at Asn-287. Over residues 408–424 (STKVGSQRGSCATTSGK) the composition is skewed to polar residues. Disordered regions lie at residues 408–433 (STKV…RDVP) and 448–485 (GSTY…QWGQ). The segment at 440-482 (SNIKFGPIGSTYKSDGTTPNPPASSSTTGSSTPTNPPAGSVDQ) is linker. Over residues 462–479 (ASSSTTGSSTPTNPPAGS) the composition is skewed to low complexity. In terms of domain architecture, CBM1 spans 478 to 514 (GSVDQWGQCGGQNYSGPTTCKSPFTCKKINDFYSQCQ). 2 disulfide bridges follow: Cys-486-Cys-503 and Cys-497-Cys-513. Residue Asn-490 is glycosylated (N-linked (GlcNAc...) asparagine).

This sequence belongs to the glycosyl hydrolase 7 (cellulase C) family.

The enzyme catalyses Hydrolysis of (1-&gt;4)-beta-D-glucosidic linkages in cellulose and cellotetraose, releasing cellobiose from the non-reducing ends of the chains.. The sequence is that of Putative exoglucanase type C from Fusarium oxysporum (Fusarium vascular wilt).